Consider the following 402-residue polypeptide: Plasminogen activator inhibitor 1 (402 aa).

An N-terminal signal peptide occupies residues Met-1 to Phe-22. N-linked (GlcNAc...) asparagine glycosylation is found at Asn-232, Asn-288, and Asn-352.

The protein belongs to the serpin family. Forms a heterodimer with TMPRSS7. Interacts with VTN. Binds LRP1B; binding is followed by internalization and degradation. Interacts with PPP1CB. In complex with PLAU/uPA, interacts with PLAUR/uPAR. Interacts with SORL1 and LRP1, either alone or in complex with PLAU; these interactions are abolished in the presence of LRPAP1/RAP. The ternary complex composed of PLAUR-PLAU-PAI1 also interacts with SORL1. Interacts with PLAT/tPA. Also interacts with SORL1, when complexed to PLAT/tPA.

The protein localises to the secreted. Its function is as follows. Serine protease inhibitor. Inhibits TMPRSS7. Is a primary inhibitor of tissue-type plasminogen activator (PLAT) and urokinase-type plasminogen activator (PLAU). As PLAT inhibitor, it is required for fibrinolysis down-regulation and is responsible for the controlled degradation of blood clots. As PLAU inhibitor, it is involved in the regulation of cell adhesion and spreading. Acts as a regulator of cell migration, independently of its role as protease inhibitor. It is required for stimulation of keratinocyte migration during cutaneous injury repair. Involved in cellular and replicative senescence. Plays a role in alveolar type 2 cells senescence in the lung. Is involved in the regulation of cementogenic differentiation of periodontal ligament stem cells, and regulates odontoblast differentiation and dentin formation during odontogenesis. The polypeptide is Plasminogen activator inhibitor 1 (Serpine1) (Mus musculus (Mouse)).